A 120-amino-acid polypeptide reads, in one-letter code: Glycine cleavage system H protein (120 aa).

The region spanning 17–99 (IATVGITSHA…QGAGWLYRMR (83 aa)) is the Lipoyl-binding domain. K58 bears the N6-lipoyllysine mark.

The protein belongs to the GcvH family. The glycine cleavage system is composed of four proteins: P, T, L and H. It depends on (R)-lipoate as a cofactor.

In terms of biological role, the glycine cleavage system catalyzes the degradation of glycine. The H protein shuttles the methylamine group of glycine from the P protein to the T protein. This is Glycine cleavage system H protein from Methylobacterium nodulans (strain LMG 21967 / CNCM I-2342 / ORS 2060).